A 366-amino-acid polypeptide reads, in one-letter code: UDP-GlcNAc:ribostamycin N-acetylglucosaminyltransferase (366 aa).

Over residues A342–G352 the composition is skewed to low complexity. Residues A342–G366 form a disordered region. The span at R357–G366 shows a compositional bias: basic and acidic residues.

It belongs to the glycosyltransferase group 1 family. Glycosyltransferase 4 subfamily. It depends on a divalent metal cation as a cofactor.

The catalysed reaction is ribostamycin + UDP-N-acetyl-alpha-D-glucosamine = 2'''-acetyl-6'''-hydroxyneomycin C + UDP + H(+). Its pathway is antibiotic biosynthesis; neomycin biosynthesis. Glycosyltransferase involved in the biosynthesis of neomycin by mediating glycosylation of ribostamycin with UDP-GlcNAc as a sugar donor to generate 2'''-acetyl-6'''-hydroxyneomycin C. The polypeptide is UDP-GlcNAc:ribostamycin N-acetylglucosaminyltransferase (neoK) (Streptomyces fradiae (Streptomyces roseoflavus)).